A 433-amino-acid chain; its full sequence is MSKLLMIGTGPVAIQLANICYLKSDYEIDMVGRASTSEKSKRLYQAYKKEKQFEVKIQNEAHQHLEGKFEINRLYKDVKNVKGEYETVVMACTADAYYDTLQQLSLETLQSVKHVILISPTFGSQMIVEQFMSKFSQDIEVISFSTYLGDTRIVDKEAPNHVLTTGVKKKLYMGSTHSNSTMCQRISALAEQLKIQLEVVESPLHAETRNSSLYVHPPLFMNDFSLKAIFEGTDVPVYVYKLFPEGPITMTLIREMRLMWKEMMAILQAFRVPSVNLLQFMVKENYPVRPETLDEGDIEHFEILPDILQEYLLYVRYTAILIDPFSQPDENGHYFDFSAVPFKQVYKNEQDVVQIPRMPSEDYYRTAMIQHIGKMLGIKTPMIDQFLTRYEASCQAYKDMHQDQQLSSQFNTNLFEGDKALVTKFLEINRTLS.

Residues 9–12 (TGPV), Arg33, 37–40 (SEKS), and Asp99 contribute to the NADP(+) site. His216 serves as the catalytic Proton donor/acceptor.

It belongs to the staphylopine dehydrogenase family. As to quaternary structure, homodimer.

It carries out the reaction staphylopine + NADP(+) + H2O = (2S)-2-amino-4-{[(1R)-1-carboxy-2-(1H-imidazol-4-yl)ethyl]amino}butanoate + pyruvate + NADPH + H(+). Its function is as follows. Catalyzes the NADPH-dependent reductive condensation of pyruvate to the intermediate formed by the adjacently encoded enzyme CntL, namely (2S)-2-amino-4-{[(1R)-1-carboxy-2-(1H-imidazol-4-yl)ethyl]amino}butanoate, leading to the production of staphylopine. This is the last step in the biosynthesis of the metallophore staphylopine, which is involved in the acquisition of nickel, cobalt, zinc, copper, and iron, and thus enables bacterial growth inside the host, where metal access is limited. Therefore, this enzyme probably contributes to staphylococcal virulence. Can use neither NADH nor alpha-ketoglutarate in place of NADPH and pyruvate, respectively. The chain is Staphylopine synthase from Staphylococcus aureus (strain Mu50 / ATCC 700699).